The following is an 853-amino-acid chain: DNA mismatch repair protein MutS (853 aa).

Residue 616-623 (GPNMGGKS) coordinates ATP.

Belongs to the DNA mismatch repair MutS family.

This protein is involved in the repair of mismatches in DNA. It is possible that it carries out the mismatch recognition step. This protein has a weak ATPase activity. In Erwinia tasmaniensis (strain DSM 17950 / CFBP 7177 / CIP 109463 / NCPPB 4357 / Et1/99), this protein is DNA mismatch repair protein MutS.